Reading from the N-terminus, the 745-residue chain is Phosphoribosylformylglycinamidine synthase subunit PurL (745 aa).

Residue His50 is part of the active site. 2 residues coordinate ATP: Tyr53 and Lys92. Glu94 is a Mg(2+) binding site. Substrate contacts are provided by residues 95–98 (SHNH) and Arg117. The active-site Proton acceptor is His96. Mg(2+) is bound at residue Asp118. Residue Gln241 coordinates substrate. Asp269 lines the Mg(2+) pocket. 313 to 315 (ESQ) is a binding site for substrate. Residues Asp495 and Gly532 each coordinate ATP. Asn533 lines the Mg(2+) pocket. Residue Ser535 participates in substrate binding.

The protein belongs to the FGAMS family. In terms of assembly, monomer. Part of the FGAM synthase complex composed of 1 PurL, 1 PurQ and 2 PurS subunits.

Its subcellular location is the cytoplasm. The enzyme catalyses N(2)-formyl-N(1)-(5-phospho-beta-D-ribosyl)glycinamide + L-glutamine + ATP + H2O = 2-formamido-N(1)-(5-O-phospho-beta-D-ribosyl)acetamidine + L-glutamate + ADP + phosphate + H(+). It participates in purine metabolism; IMP biosynthesis via de novo pathway; 5-amino-1-(5-phospho-D-ribosyl)imidazole from N(2)-formyl-N(1)-(5-phospho-D-ribosyl)glycinamide: step 1/2. Its function is as follows. Part of the phosphoribosylformylglycinamidine synthase complex involved in the purines biosynthetic pathway. Catalyzes the ATP-dependent conversion of formylglycinamide ribonucleotide (FGAR) and glutamine to yield formylglycinamidine ribonucleotide (FGAM) and glutamate. The FGAM synthase complex is composed of three subunits. PurQ produces an ammonia molecule by converting glutamine to glutamate. PurL transfers the ammonia molecule to FGAR to form FGAM in an ATP-dependent manner. PurS interacts with PurQ and PurL and is thought to assist in the transfer of the ammonia molecule from PurQ to PurL. This is Phosphoribosylformylglycinamidine synthase subunit PurL from Allorhizobium ampelinum (strain ATCC BAA-846 / DSM 112012 / S4) (Agrobacterium vitis (strain S4)).